We begin with the raw amino-acid sequence, 873 residues long: Programmed cell death 6-interacting protein (873 aa).

N-acetylalanine is present on alanine 2. One can recognise a BRO1 domain in the interval 3–397 (SFIWVQLKKT…AQMREATTLA (395 aa)). Residues 176–508 (TVDISPDTVG…KFRAVLDKAV (333 aa)) are interaction with CHMP4A, CHMP4B and CHMP4C. Lysine 215 carries the N6-acetyllysine modification. The interaction with SDCBP stretch occupies residues 423-873 (LTKSTAVVEQ…PPQQSYYPQQ (451 aa)). Threonine 484 is subject to Phosphothreonine. Serine 486 is modified (phosphoserine). The segment at 508 to 873 (VQADGQVKER…PPQQSYYPQQ (366 aa)) is self-association. Disordered regions lie at residues 719–808 (AREP…GPPY) and 837–873 (PYPP…YPQQ). An interaction with TSG101 region spans residues 722-725 (PSAP). Residue serine 735 is modified to Phosphoserine. A phosphothreonine mark is found at threonine 742 and threonine 745. The span at 745–767 (TPAPRTMPPAKPQPPARPPPPVL) shows a compositional bias: pro residues. An Omega-N-methylarginine modification is found at arginine 749. Residues 768–791 (PANRVPPAAAATAPAGVGTASAAP) show a composition bias toward low complexity. Composition is skewed to pro residues over residues 792-808 (PQTP…GPPY) and 849-865 (APYP…PQPP). The interaction with CEP55 stretch occupies residues 802-811 (QAQGPPYPTY).

Self-associates. Interacts with SH3KBP1. Interacts with PDCD6 in a calcium-dependent manner. Interacts with TSG101 in a calcium-dependent manner; PDCD6IP homooligomerization may be required for TSG101-binding. Interacts with SGSM3. Directly interacts with CHMP4A, CHMP4B and CHMP4C. Directly interacts with CEP55 in a 1:2 stoechiometry; this interaction is required for PDCD6IP targeting to the midbody. May interact with PDGFRB. Interacts with SH3GL1 and SH3GL2/endophilin-1. Forms a complex with SDCBP and SDC2. Found in a complex with F-actin, TJP1/ZO-1 and PARD3. Interacts with CD2AP. Interacts with ARRDC1. Interacts (via BRO1 domain) with the ATG12-ATG3 conjugate; this interaction is bridged by ATG12 and promotes multiple PDCD6IP-mediated functions such as endolysosomal trafficking, macroautophagy and exosome biogenesis. Post-translationally, may be phosphorylated on tyrosine residues by activated PDGFRB. As to expression, expressed in astrocytes and glioma cells.

It is found in the cytoplasm. It localises to the cytosol. The protein resides in the melanosome. Its subcellular location is the cytoskeleton. The protein localises to the microtubule organizing center. It is found in the centrosome. It localises to the secreted. The protein resides in the extracellular exosome. Its subcellular location is the cell junction. The protein localises to the tight junction. It is found in the midbody. It localises to the midbody ring. In terms of biological role, multifunctional protein involved in endocytosis, multivesicular body biogenesis, membrane repair, cytokinesis, apoptosis and maintenance of tight junction integrity. Class E VPS protein involved in concentration and sorting of cargo proteins of the multivesicular body (MVB) for incorporation into intralumenal vesicles (ILVs) that are generated by invagination and scission from the limiting membrane of the endosome. Binds to the phospholipid lysobisphosphatidic acid (LBPA) which is abundant in MVBs internal membranes. The MVB pathway requires the sequential function of ESCRT-O, -I,-II and -III complexes. The ESCRT machinery also functions in topologically equivalent membrane fission events, such as the terminal stages of cytokinesis. Adapter for a subset of ESCRT-III proteins, such as CHMP4, to function at distinct membranes. Required for completion of cytokinesis. May play a role in the regulation of both apoptosis and cell proliferation. Regulates exosome biogenesis in concert with SDC1/4 and SDCBP. By interacting with F-actin, PARD3 and TJP1 secures the proper assembly and positioning of actomyosin-tight junction complex at the apical sides of adjacent epithelial cells that defines a spatial membrane domain essential for the maintenance of epithelial cell polarity and barrier. The protein is Programmed cell death 6-interacting protein of Rattus norvegicus (Rat).